We begin with the raw amino-acid sequence, 334 residues long: Beta-glucanase (334 aa).

The N-terminal stretch at 1–27 is a signal peptide; that stretch reads MKNRVISLLMASLLLVLSVIVAPFYKA. Residues 28-248 enclose the GH16 domain; sequence EAATVVNTPF…YVKYYPNGVP (221 aa). E136 (nucleophile) is an active-site residue. The Proton donor role is filled by E140. Residues 246–265 are disordered; sequence GVPQDNPTPTPTIAPSTPTN. The region spanning 267–334 is the Dockerin domain; that stretch reads NLPLKGDVNG…RYLIRAIPSL (68 aa).

The protein belongs to the glycosyl hydrolase 16 family.

It catalyses the reaction Hydrolysis of (1-&gt;4)-beta-D-glucosidic linkages in beta-D-glucans containing (1-&gt;3)- and (1-&gt;4)-bonds.. This Acetivibrio thermocellus (Hungateiclostridium thermocellum) protein is Beta-glucanase (licB).